The sequence spans 70 residues: MTTVRLRENEPFEVALRRFKRTIEKNGLLTDLRAREFYEKPTAERKRKKAAAAKRHYKRIRSQMLPKKLY.

Belongs to the bacterial ribosomal protein bS21 family.

This Polynucleobacter asymbioticus (strain DSM 18221 / CIP 109841 / QLW-P1DMWA-1) (Polynucleobacter necessarius subsp. asymbioticus) protein is Small ribosomal subunit protein bS21.